A 252-amino-acid chain; its full sequence is Phosphate import ATP-binding protein PstB (252 aa).

The ABC transporter domain maps to 6-247 (IEVKNLNTYF…PKNKQTENYI (242 aa)). An ATP-binding site is contributed by 38–45 (GPSGCGKS).

It belongs to the ABC transporter superfamily. Phosphate importer (TC 3.A.1.7) family. The complex is composed of two ATP-binding proteins (PstB), two transmembrane proteins (PstC and PstA) and a solute-binding protein (PstS).

The protein localises to the cell membrane. It catalyses the reaction phosphate(out) + ATP + H2O = ADP + 2 phosphate(in) + H(+). Part of the ABC transporter complex PstSACB involved in phosphate import. Responsible for energy coupling to the transport system. The chain is Phosphate import ATP-binding protein PstB from Methanosphaera stadtmanae (strain ATCC 43021 / DSM 3091 / JCM 11832 / MCB-3).